Here is a 651-residue protein sequence, read N- to C-terminus: Apical membrane antigen 1-like protein (651 aa).

Residues Met1–Ala41 form the signal peptide. Residues Thr42–Pro81 constitute a propeptide, removed in mature form. Over Thr42–Thr570 the chain is Extracellular. 7 disulfides stabilise this stretch: Cys141–Cys309, Cys215–Cys248, Cys264–Cys277, Cys327–Cys417, Cys347–Cys408, Cys441–Cys463, and Cys453–Cys475. N-linked (GlcNAc...) asparagine glycosylation is present at Asn230. The 1; approximate repeat unit spans residues Pro483–Lys486. The 12 x 4 AA approximate tandem-repeats of P-P-V-E stretch occupies residues Pro483–Glu531. Pro residues predominate over residues Pro483–Pro547. The tract at residues Pro483–Gly567 is disordered. Tandem repeats lie at residues Pro487 to Glu490, Pro491 to Glu494, Pro495 to Glu498, Pro499 to Glu502, Pro503 to Glu506, Pro507 to Glu510, Pro511 to Glu514, Pro515 to Glu518, and Pro519 to Glu522. The stretch at Pro523–Glu527 is one 11; approximate repeat. A 12; approximate repeat occupies Pro528 to Glu531. The helical transmembrane segment at Ala571 to Val591 threads the bilayer. Over Gly592–Phe651 the chain is Cytoplasmic. A disordered region spans residues Arg598 to Phe651.

Belongs to the apicomplexan parasites AMA1 family. Proteolytically cleaved within its transmembrane domain, releasing a soluble form from the cell surface.

It is found in the cell membrane. The protein localises to the secreted. May play a role in host cell invasion. This is Apical membrane antigen 1-like protein from Toxoplasma gondii (strain ATCC 50861 / VEG).